Here is a 128-residue protein sequence, read N- to C-terminus: RYamide neuropeptides (128 aa).

Positions 1-23 (MHARKLIVVLVYILTVLVSVAVS) are cleaved as a signal peptide. Residues 26 to 29 (YTSE) constitute a propeptide that is removed on maturation. Tyr44 is subject to Tyrosine amide. Positions 47–63 (GGPSPNNKENKVNIRPR) are excised as a propeptide. Tyrosine amide is present on Tyr73. Residues 77–128 (SGWSPNASLVYPVSTPLCGLDEDLSCAYTGISDLYRCTPRKGESEEFTTSSN) constitute a propeptide that is removed on maturation.

The protein resides in the secreted. Functionally, neuropeptides RYamide-1 and RYamide-2 are ligands for the G-protein coupled receptor RYa-R. RYamide-2 is the most potent activator of RYa-R. The protein is RYamide neuropeptides of Tribolium castaneum (Red flour beetle).